The following is a 665-amino-acid chain: Translation factor guf1, mitochondrial (665 aa).

A mitochondrion-targeting transit peptide spans 1 to 53; that stretch reads MRGCLQVLRWLSTSPARRPVSSGLRLRSYEIVSPSILRPFTSTVRRQAQASRN. Residues 67–247 form the tr-type G domain; it reads ERFRNFCIVA…TVIERIPAPV (181 aa). Residues 76-83, 140-144, and 194-197 contribute to the GTP site; these read AHVDHGKS, DTPGH, and NKVD.

This sequence belongs to the TRAFAC class translation factor GTPase superfamily. Classic translation factor GTPase family. LepA subfamily.

Its subcellular location is the mitochondrion inner membrane. The enzyme catalyses GTP + H2O = GDP + phosphate + H(+). Promotes mitochondrial protein synthesis. May act as a fidelity factor of the translation reaction, by catalyzing a one-codon backward translocation of tRNAs on improperly translocated ribosomes. Binds to mitochondrial ribosomes in a GTP-dependent manner. The sequence is that of Translation factor guf1, mitochondrial (guf1) from Talaromyces stipitatus (strain ATCC 10500 / CBS 375.48 / QM 6759 / NRRL 1006) (Penicillium stipitatum).